A 93-amino-acid chain; its full sequence is Cell division protein CrgA (93 aa).

Transmembrane regions (helical) follow at residues 31-51 (VWFV…LMVF) and 70-90 (LGPW…LLTM).

This sequence belongs to the CrgA family.

It is found in the cell membrane. Functionally, involved in cell division. This Mycobacterium leprae (strain Br4923) protein is Cell division protein CrgA.